Here is a 276-residue protein sequence, read N- to C-terminus: Chlorophyll a-b binding protein CP29.3, chloroplastic (276 aa).

The N-terminal 29 residues, 1–29 (MATTTAAAASGIFGIRIQDPRPGTGRVQA), are a transit peptide targeting the chloroplast. The interval 1–53 (MATTTAAAASGIFGIRIQDPRPGTGRVQARFGFSFGKKKPAPPPKKSRQVQDD) is disordered. Basic residues predominate over residues 36 to 48 (GKKKPAPPPKKSR). Tryptophan 59 provides a ligand contact to chlorophyll b. The chlorophyll a site is built by phenylalanine 79, glutamate 141, and histidine 144. Residues 147-167 (WAMLGTLGAIAVEALTGIAWQ) traverse the membrane as a helical segment. Leucine 181 serves as a coordination point for chlorophyll a. A helical transmembrane segment spans residues 185–205 (LPFSLTTLIWIEVLVVGYIEF). 2 residues coordinate chlorophyll b: glutamate 204 and arginine 207. 4 residues coordinate chlorophyll a: glutamate 242, histidine 245, arginine 247, and glutamine 259. Residues 248–268 (LAMVAFLIFALQAAFTGKGPV) traverse the membrane as a helical segment.

Belongs to the light-harvesting chlorophyll a/b-binding (LHC) protein family. In terms of assembly, the LHC complex consists of chlorophyll a-b binding proteins. The cofactor is Binds at least 14 chlorophylls (8 Chl-a and 6 Chl-b) and carotenoids such as lutein and neoxanthin.. Photoregulated by reversible phosphorylation of its threonine residues.

It localises to the plastid. The protein resides in the chloroplast thylakoid membrane. Its function is as follows. The light-harvesting complex (LHC) functions as a light receptor, it captures and delivers excitation energy to photosystems with which it is closely associated. The protein is Chlorophyll a-b binding protein CP29.3, chloroplastic (LHCB4.3) of Arabidopsis thaliana (Mouse-ear cress).